The chain runs to 130 residues: Splicing regulatory small protein (130 aa).

Basic residues predominate over residues 1–10; sequence MRTKPQRPRA. Disordered regions lie at residues 1 to 29 and 74 to 130; these read MRTK…EETG and GRAL…STRR. Positions 16 to 22 are mediates interaction with SRSF3; it reads GQPCGSP. A compositionally biased stretch (basic and acidic residues) spans 77–98; sequence LEPKADPHTCPYGRKESRGEKV. The span at 120–130 shows a compositional bias: polar residues; sequence SLKSGSPSTRR.

In terms of assembly, interacts with SRSF3; increases SRSF3 binding to specific exons.

The protein localises to the nucleus. Its function is as follows. Interacts with the splicing factor SRSF3 and increases its binding to specific exons within pre-mRNA, thereby regulating exon-inclusion during alternative splicing. Does not directly bind pre-mRNA and could regulate a wider range of splicing factors through a similar mechanism. The chain is Splicing regulatory small protein from Homo sapiens (Human).